The primary structure comprises 276 residues: Ribosomal RNA small subunit methyltransferase A (276 aa).

S-adenosyl-L-methionine-binding residues include Asn-15, Leu-17, Gly-42, Glu-63, Asp-88, and Asn-111.

Belongs to the class I-like SAM-binding methyltransferase superfamily. rRNA adenine N(6)-methyltransferase family. RsmA subfamily.

It is found in the cytoplasm. It carries out the reaction adenosine(1518)/adenosine(1519) in 16S rRNA + 4 S-adenosyl-L-methionine = N(6)-dimethyladenosine(1518)/N(6)-dimethyladenosine(1519) in 16S rRNA + 4 S-adenosyl-L-homocysteine + 4 H(+). Functionally, specifically dimethylates two adjacent adenosines (A1518 and A1519) in the loop of a conserved hairpin near the 3'-end of 16S rRNA in the 30S particle. May play a critical role in biogenesis of 30S subunits. This Geobacter sulfurreducens (strain ATCC 51573 / DSM 12127 / PCA) protein is Ribosomal RNA small subunit methyltransferase A.